Consider the following 260-residue polypeptide: Adenosylcobinamide-GDP ribazoletransferase (260 aa).

A run of 8 helical transmembrane segments spans residues 3–23, 36–56, 60–80, 108–128, 133–153, 180–200, 206–226, and 239–259; these read APLWLRDLAGAWIFYSVLPAW, FAPWIGLVLGGLQSFLWLVLI, WPTSAVALLVIGLGAWLSGGL, VGASGVQALLVVVLLQIAALL, LAPLALLIAAFWGRCAPLWAM, ALPAFLVLLLALTVVPLLMIV, MVLMAGIGVGVLPAFLVPELL, and GASVVLVETITLLLLAVLLTA.

It belongs to the CobS family. Mg(2+) serves as cofactor.

Its subcellular location is the cell inner membrane. The enzyme catalyses alpha-ribazole + adenosylcob(III)inamide-GDP = adenosylcob(III)alamin + GMP + H(+). It carries out the reaction alpha-ribazole 5'-phosphate + adenosylcob(III)inamide-GDP = adenosylcob(III)alamin 5'-phosphate + GMP + H(+). It functions in the pathway cofactor biosynthesis; adenosylcobalamin biosynthesis; adenosylcobalamin from cob(II)yrinate a,c-diamide: step 7/7. In terms of biological role, joins adenosylcobinamide-GDP and alpha-ribazole to generate adenosylcobalamin (Ado-cobalamin). Also synthesizes adenosylcobalamin 5'-phosphate from adenosylcobinamide-GDP and alpha-ribazole 5'-phosphate. The sequence is that of Adenosylcobinamide-GDP ribazoletransferase from Prochlorococcus marinus (strain MIT 9303).